The primary structure comprises 234 residues: S-adenosylmethionine synthase 1 (234 aa).

ATP contacts are provided by residues 10–12 (DGK), 78–81 (SGRF), aspartate 89, 95–96 (RK), alanine 112, lysine 116, and lysine 120. Aspartate 89 contacts L-methionine. Residue lysine 120 coordinates L-methionine.

Belongs to the AdoMet synthase family. Homotetramer. It depends on Mn(2+) as a cofactor. The cofactor is Mg(2+). Co(2+) serves as cofactor. K(+) is required as a cofactor. In terms of tissue distribution, mainly in floral buds and roots.

The protein localises to the cytoplasm. The enzyme catalyses L-methionine + ATP + H2O = S-adenosyl-L-methionine + phosphate + diphosphate. Its pathway is amino-acid biosynthesis; S-adenosyl-L-methionine biosynthesis; S-adenosyl-L-methionine from L-methionine: step 1/1. In terms of biological role, catalyzes the formation of S-adenosylmethionine from methionine and ATP. The reaction comprises two steps that are both catalyzed by the same enzyme: formation of S-adenosylmethionine (AdoMet) and triphosphate, and subsequent hydrolysis of the triphosphate. This chain is S-adenosylmethionine synthase 1 (SMS-1), found in Petroselinum crispum (Parsley).